The following is a 713-amino-acid chain: Polyribonucleotide nucleotidyltransferase (713 aa).

Residues Asp-488 and Asp-494 each coordinate Mg(2+). A KH domain is found at Pro-555–Ile-614. Residues Gly-624–Lys-692 form the S1 motif domain.

Belongs to the polyribonucleotide nucleotidyltransferase family. Mg(2+) serves as cofactor.

The protein localises to the cytoplasm. It carries out the reaction RNA(n+1) + phosphate = RNA(n) + a ribonucleoside 5'-diphosphate. Functionally, involved in mRNA degradation. Catalyzes the phosphorolysis of single-stranded polyribonucleotides processively in the 3'- to 5'-direction. The protein is Polyribonucleotide nucleotidyltransferase of Hyphomonas neptunium (strain ATCC 15444).